Consider the following 84-residue polypeptide: Kunitz-type serine protease inhibitor 2 (84 aa).

A signal peptide spans 1 to 24; the sequence is MSSGGLLLLLGLLTLWAEPTPISG. Glutamine 25 is subject to Pyrrolidone carboxylic acid. One can recognise a BPTI/Kunitz inhibitor domain in the interval 31–81; that stretch reads CFLRPDFGRYGHPRPRFYYNPATNQCQGFLAQRSRENTNNFDTRDKCRQTC. 2 disulfides stabilise this stretch: cysteine 31–cysteine 81 and cysteine 56–cysteine 77.

This sequence belongs to the venom Kunitz-type family. As to expression, expressed by the venom gland.

The protein resides in the secreted. Its function is as follows. Serine protease inhibitor. In Daboia russelii (Russel's viper), this protein is Kunitz-type serine protease inhibitor 2.